We begin with the raw amino-acid sequence, 136 residues long: Ribonuclease P protein component (136 aa).

It belongs to the RnpA family. As to quaternary structure, consists of a catalytic RNA component (M1 or rnpB) and a protein subunit.

It carries out the reaction Endonucleolytic cleavage of RNA, removing 5'-extranucleotides from tRNA precursor.. RNaseP catalyzes the removal of the 5'-leader sequence from pre-tRNA to produce the mature 5'-terminus. It can also cleave other RNA substrates such as 4.5S RNA. The protein component plays an auxiliary but essential role in vivo by binding to the 5'-leader sequence and broadening the substrate specificity of the ribozyme. The protein is Ribonuclease P protein component of Arthrobacter sp. (strain FB24).